A 324-amino-acid polypeptide reads, in one-letter code: Phospho-N-acetylmuramoyl-pentapeptide-transferase (324 aa).

A run of 10 helical transmembrane segments spans residues 5 to 25 (VMVL…PLFI), 50 to 70 (GTPT…TLLM), 77 to 97 (LSVE…LGFL), 117 to 137 (LIGQ…SGFS), 147 to 167 (LSIN…VGGS), 176 to 196 (LDGL…VLAW), 203 to 223 (IAIF…FNAH), 227 to 247 (VFMG…VAIL), 250 to 270 (LEIL…SVII), and 304 to 324 (VTFW…EVWI).

Belongs to the glycosyltransferase 4 family. MraY subfamily. Mg(2+) serves as cofactor.

It is found in the cell membrane. It carries out the reaction UDP-N-acetyl-alpha-D-muramoyl-L-alanyl-gamma-D-glutamyl-meso-2,6-diaminopimeloyl-D-alanyl-D-alanine + di-trans,octa-cis-undecaprenyl phosphate = di-trans,octa-cis-undecaprenyl diphospho-N-acetyl-alpha-D-muramoyl-L-alanyl-D-glutamyl-meso-2,6-diaminopimeloyl-D-alanyl-D-alanine + UMP. It participates in cell wall biogenesis; peptidoglycan biosynthesis. Functionally, catalyzes the initial step of the lipid cycle reactions in the biosynthesis of the cell wall peptidoglycan: transfers peptidoglycan precursor phospho-MurNAc-pentapeptide from UDP-MurNAc-pentapeptide onto the lipid carrier undecaprenyl phosphate, yielding undecaprenyl-pyrophosphoryl-MurNAc-pentapeptide, known as lipid I. This chain is Phospho-N-acetylmuramoyl-pentapeptide-transferase, found in Geobacillus sp. (strain WCH70).